A 584-amino-acid chain; its full sequence is Arginine--tRNA ligase (584 aa).

The short motif at 126–136 is the 'HIGH' region element; sequence PNIAKEMHVGH.

It belongs to the class-I aminoacyl-tRNA synthetase family. Monomer.

It localises to the cytoplasm. The catalysed reaction is tRNA(Arg) + L-arginine + ATP = L-arginyl-tRNA(Arg) + AMP + diphosphate. The protein is Arginine--tRNA ligase of Synechococcus sp. (strain ATCC 27144 / PCC 6301 / SAUG 1402/1) (Anacystis nidulans).